A 557-amino-acid polypeptide reads, in one-letter code: MAYNRRSKHITQGVARSPNRSMYYALGYQKDDFDKPMVGIANGHSTITPCNSGLQRLSDAAVAAVKAADANPQIFGTPTISDGMSMGTEGMKYSLVSREVIADCIETCVQGQWMDGVVVVGGCDKNMPGGMIALARLNVPGIYVYGGTIRPGNWKGRDLTIVSSFEAVGEFTAGRMSQEDFEGVERNACPTSGSCGGMYTANTMSSSFEALGMSLLYSSTMANPDQEKVDSAAESARVLVEAVKRDLKPRDIITKESIENAVSVIMATGGSTNAVLHYLAIAHAAEVDWTIEDFERIRKRVPVICDLKPSGKYVATDLHRAGGIPQVLKILLDAGLLHGDCMTITGRTIADELKDVPSVPRADQDVIFPIDRALYKEGHLAILKGNLAEDGAVAKITGLKNPVITGPARVFDDEQSAMDAILGDRIRAGDILVLRYLGPKGGPGMPEMLAPTSAIIGKGLGESVGFITDGRFSGGTWGMVVGHVAPEAFVGGTIALVQEGDSITIDAHRLLLQLNVDDAELARRRAAWQQPAPRYTRGVLAKFAALARPANQGAVTG.

C50 is a [2Fe-2S] cluster binding site. D82 contributes to the Mg(2+) binding site. A [2Fe-2S] cluster-binding site is contributed by C123. Residues D124 and K125 each contribute to the Mg(2+) site. Residue K125 is modified to N6-carboxylysine. [2Fe-2S] cluster is bound at residue C195. E447 lines the Mg(2+) pocket. Residue S473 is the Proton acceptor of the active site.

This sequence belongs to the IlvD/Edd family. As to quaternary structure, homodimer. [2Fe-2S] cluster is required as a cofactor. It depends on Mg(2+) as a cofactor.

It carries out the reaction (2R)-2,3-dihydroxy-3-methylbutanoate = 3-methyl-2-oxobutanoate + H2O. The enzyme catalyses (2R,3R)-2,3-dihydroxy-3-methylpentanoate = (S)-3-methyl-2-oxopentanoate + H2O. It functions in the pathway amino-acid biosynthesis; L-isoleucine biosynthesis; L-isoleucine from 2-oxobutanoate: step 3/4. Its pathway is amino-acid biosynthesis; L-valine biosynthesis; L-valine from pyruvate: step 3/4. In terms of biological role, functions in the biosynthesis of branched-chain amino acids. Catalyzes the dehydration of (2R,3R)-2,3-dihydroxy-3-methylpentanoate (2,3-dihydroxy-3-methylvalerate) into 2-oxo-3-methylpentanoate (2-oxo-3-methylvalerate) and of (2R)-2,3-dihydroxy-3-methylbutanoate (2,3-dihydroxyisovalerate) into 2-oxo-3-methylbutanoate (2-oxoisovalerate), the penultimate precursor to L-isoleucine and L-valine, respectively. The protein is Dihydroxy-acid dehydratase 2 of Burkholderia lata (strain ATCC 17760 / DSM 23089 / LMG 22485 / NCIMB 9086 / R18194 / 383).